Reading from the N-terminus, the 61-residue chain is Conotoxin 3 (61 aa).

Positions 1-21 (MRCLPVFVILLLLIASVPSDA) are cleaved as a signal peptide. Residues 22 to 48 (VQLKTKDDMPLPSFNGNARRTPRMLSN) constitute a propeptide that is removed on maturation. Trp58 is subject to 6'-bromotryptophan.

It belongs to the conotoxin T superfamily. Contains 2 disulfide bonds that can be either 'C1-C3, C2-C4' or 'C1-C4, C2-C3', since these disulfide connectivities have been observed for conotoxins with cysteine framework V (for examples, see AC P0DQQ7 and AC P81755). Post-translationally, contains 2 disulfide bonds. In terms of tissue distribution, expressed by the venom duct.

The protein localises to the secreted. In Conus textile (Cloth-of-gold cone), this protein is Conotoxin 3.